A 347-amino-acid chain; its full sequence is uncharacterized protein (347 aa).

This is an uncharacterized protein from Caenorhabditis elegans.